Consider the following 368-residue polypeptide: Dual-specificity RNA methyltransferase RlmN (368 aa).

Glu94 (proton acceptor) is an active-site residue. In terms of domain architecture, Radical SAM core spans 100–334; the sequence is EEDRATLCVS…VIVRKTRGDD (235 aa). Cys107 and Cys339 form a disulfide bridge. [4Fe-4S] cluster is bound by residues Cys114, Cys118, and Cys121. S-adenosyl-L-methionine contacts are provided by residues 163–164, Ser195, 217–219, and Asn296; these read GE and SLH. The active-site S-methylcysteine intermediate is Cys339.

Belongs to the radical SAM superfamily. RlmN family. It depends on [4Fe-4S] cluster as a cofactor.

It localises to the cytoplasm. The catalysed reaction is adenosine(2503) in 23S rRNA + 2 reduced [2Fe-2S]-[ferredoxin] + 2 S-adenosyl-L-methionine = 2-methyladenosine(2503) in 23S rRNA + 5'-deoxyadenosine + L-methionine + 2 oxidized [2Fe-2S]-[ferredoxin] + S-adenosyl-L-homocysteine. The enzyme catalyses adenosine(37) in tRNA + 2 reduced [2Fe-2S]-[ferredoxin] + 2 S-adenosyl-L-methionine = 2-methyladenosine(37) in tRNA + 5'-deoxyadenosine + L-methionine + 2 oxidized [2Fe-2S]-[ferredoxin] + S-adenosyl-L-homocysteine. Functionally, specifically methylates position 2 of adenine 2503 in 23S rRNA and position 2 of adenine 37 in tRNAs. m2A2503 modification seems to play a crucial role in the proofreading step occurring at the peptidyl transferase center and thus would serve to optimize ribosomal fidelity. This chain is Dual-specificity RNA methyltransferase RlmN, found in Aeromonas salmonicida (strain A449).